The primary structure comprises 528 residues: Calcium-dependent protein kinase 17 (528 aa).

The disordered stretch occupies residues 1 to 65 (MGNCCSHGRD…GPIGPVLGRP (65 aa)). The N-myristoyl glycine moiety is linked to residue glycine 2. Low complexity predominate over residues 20–45 (NGASASNAANSTGPTAEASVPQSKHA). Residues 73–331 (YSLGKELGRG…AAQVLNHPWI (259 aa)) enclose the Protein kinase domain. Residues 79–87 (LGRGQFGVT) and lysine 102 each bind ATP. Aspartate 197 acts as the Proton acceptor in catalysis. Serine 237 is subject to Phosphoserine. The autoinhibitory domain stretch occupies residues 337-367 (APDVPLDNAVMSRLKQFKAMNNFKKVALRVI). EF-hand domains follow at residues 374-409 (EEIM…QGTR), 410-445 (LSEY…INRL), 446-481 (DREE…FGMN), and 485-516 (DIKE…GNPD). Ca(2+) is bound by residues aspartate 387, aspartate 389, serine 391, threonine 393, glutamate 398, aspartate 423, aspartate 425, asparagine 427, threonine 429, glutamate 434, aspartate 459, aspartate 461, serine 463, tyrosine 465, glutamate 470, aspartate 494, aspartate 496, aspartate 498, arginine 500, and glutamate 505.

It belongs to the protein kinase superfamily. Ser/Thr protein kinase family. CDPK subfamily.

The protein localises to the membrane. It catalyses the reaction L-seryl-[protein] + ATP = O-phospho-L-seryl-[protein] + ADP + H(+). The catalysed reaction is L-threonyl-[protein] + ATP = O-phospho-L-threonyl-[protein] + ADP + H(+). With respect to regulation, activated by calcium. Autophosphorylation may play an important role in the regulation of the kinase activity. Its function is as follows. May play a role in signal transduction pathways that involve calcium as a second messenger. This chain is Calcium-dependent protein kinase 17 (CPK17), found in Arabidopsis thaliana (Mouse-ear cress).